The sequence spans 470 residues: 3-oxo-isoapionate kinase (470 aa).

Residues aspartate 30 and arginine 78 each coordinate substrate. Residues serine 291, 403-406 (GGDS), and glycine 451 contribute to the ATP site.

It belongs to the four-carbon acid sugar kinase family.

It catalyses the reaction 3-oxoisoapionate + ATP = 3-oxoisoapionate 4-phosphate + ADP + H(+). Its pathway is carbohydrate metabolism. Involved in catabolism of D-apiose. Catalyzes the phosphorylation of 3-oxo-isoapionate to 3-oxo-isoapionate 4-phosphate. The chain is 3-oxo-isoapionate kinase from Paraburkholderia graminis (strain ATCC 700544 / DSM 17151 / LMG 18924 / NCIMB 13744 / C4D1M).